Here is an 85-residue protein sequence, read N- to C-terminus: Phosphocarrier protein HPr (85 aa).

Residues 1–85 enclose the HPr domain; sequence MFQQEVTITA…HLVKLMAELE (85 aa). His-15 (pros-phosphohistidine intermediate) is an active-site residue.

Its subcellular location is the cytoplasm. Functionally, general (non sugar-specific) component of the phosphoenolpyruvate-dependent sugar phosphotransferase system (sugar PTS). This major carbohydrate active-transport system catalyzes the phosphorylation of incoming sugar substrates concomitantly with their translocation across the cell membrane. The phosphoryl group from phosphoenolpyruvate (PEP) is transferred to the phosphoryl carrier protein HPr by enzyme I. Phospho-HPr then transfers it to the PTS EIIA domain. The polypeptide is Phosphocarrier protein HPr (ptsH) (Klebsiella pneumoniae).